We begin with the raw amino-acid sequence, 210 residues long: Putative O-methyltransferase MSMEG_5073/MSMEI_4947 (210 aa).

S-adenosyl-L-methionine contacts are provided by residues Val37, Glu59, 61–62, Ser67, Asp85, and Val86; that span reads GT. Asp133 contributes to the substrate binding site. Asp135 contributes to the S-adenosyl-L-methionine binding site.

It belongs to the class I-like SAM-binding methyltransferase superfamily. Cation-dependent O-methyltransferase family.

This chain is Putative O-methyltransferase MSMEG_5073/MSMEI_4947, found in Mycolicibacterium smegmatis (strain ATCC 700084 / mc(2)155) (Mycobacterium smegmatis).